A 271-amino-acid polypeptide reads, in one-letter code: Formamidopyrimidine-DNA glycosylase (271 aa).

Residue P2 is the Schiff-base intermediate with DNA of the active site. E3 acts as the Proton donor in catalysis. K58 (proton donor; for beta-elimination activity) is an active-site residue. DNA is bound by residues H91, R110, and R152. The FPG-type zinc finger occupies W237 to H271. The Proton donor; for delta-elimination activity role is filled by R261.

This sequence belongs to the FPG family. In terms of assembly, monomer. It depends on Zn(2+) as a cofactor.

The catalysed reaction is Hydrolysis of DNA containing ring-opened 7-methylguanine residues, releasing 2,6-diamino-4-hydroxy-5-(N-methyl)formamidopyrimidine.. It carries out the reaction 2'-deoxyribonucleotide-(2'-deoxyribose 5'-phosphate)-2'-deoxyribonucleotide-DNA = a 3'-end 2'-deoxyribonucleotide-(2,3-dehydro-2,3-deoxyribose 5'-phosphate)-DNA + a 5'-end 5'-phospho-2'-deoxyribonucleoside-DNA + H(+). Functionally, involved in base excision repair of DNA damaged by oxidation or by mutagenic agents. Acts as a DNA glycosylase that recognizes and removes damaged bases. Has a preference for oxidized purines, such as 7,8-dihydro-8-oxoguanine (8-oxoG). Has AP (apurinic/apyrimidinic) lyase activity and introduces nicks in the DNA strand. Cleaves the DNA backbone by beta-delta elimination to generate a single-strand break at the site of the removed base with both 3'- and 5'-phosphates. The chain is Formamidopyrimidine-DNA glycosylase from Nitrosomonas europaea (strain ATCC 19718 / CIP 103999 / KCTC 2705 / NBRC 14298).